The primary structure comprises 466 residues: UDP-N-acetylmuramoylalanine--D-glutamate ligase (466 aa).

121–127 (GTNGKST) serves as a coordination point for ATP.

The protein belongs to the MurCDEF family.

The protein resides in the cytoplasm. It catalyses the reaction UDP-N-acetyl-alpha-D-muramoyl-L-alanine + D-glutamate + ATP = UDP-N-acetyl-alpha-D-muramoyl-L-alanyl-D-glutamate + ADP + phosphate + H(+). The protein operates within cell wall biogenesis; peptidoglycan biosynthesis. Functionally, cell wall formation. Catalyzes the addition of glutamate to the nucleotide precursor UDP-N-acetylmuramoyl-L-alanine (UMA). In Mesorhizobium japonicum (strain LMG 29417 / CECT 9101 / MAFF 303099) (Mesorhizobium loti (strain MAFF 303099)), this protein is UDP-N-acetylmuramoylalanine--D-glutamate ligase.